The chain runs to 217 residues: Probable transaldolase (217 aa).

Lys-83 serves as the catalytic Schiff-base intermediate with substrate.

Belongs to the transaldolase family. Type 3B subfamily.

It is found in the cytoplasm. The catalysed reaction is D-sedoheptulose 7-phosphate + D-glyceraldehyde 3-phosphate = D-erythrose 4-phosphate + beta-D-fructose 6-phosphate. Its pathway is carbohydrate degradation; pentose phosphate pathway; D-glyceraldehyde 3-phosphate and beta-D-fructose 6-phosphate from D-ribose 5-phosphate and D-xylulose 5-phosphate (non-oxidative stage): step 2/3. In terms of biological role, transaldolase is important for the balance of metabolites in the pentose-phosphate pathway. This chain is Probable transaldolase, found in Ruegeria sp. (strain TM1040) (Silicibacter sp.).